The sequence spans 210 residues: Large ribosomal subunit protein uL4 (210 aa).

The interval 46–96 (QGNASTKTRAEVRGGGRKPWRQKGTGRARAGSNRSPLWRGGGVIFGPKPRD) is disordered. The segment covering 60–71 (GGRKPWRQKGTG) has biased composition (basic residues).

The protein belongs to the universal ribosomal protein uL4 family. Part of the 50S ribosomal subunit.

One of the primary rRNA binding proteins, this protein initially binds near the 5'-end of the 23S rRNA. It is important during the early stages of 50S assembly. It makes multiple contacts with different domains of the 23S rRNA in the assembled 50S subunit and ribosome. Its function is as follows. Forms part of the polypeptide exit tunnel. The protein is Large ribosomal subunit protein uL4 of Gloeothece citriformis (strain PCC 7424) (Cyanothece sp. (strain PCC 7424)).